A 331-amino-acid polypeptide reads, in one-letter code: Adenosine deaminase (331 aa).

Zn(2+) contacts are provided by His-12 and His-14. Positions 14, 16, and 170 each coordinate substrate. His-197 serves as a coordination point for Zn(2+). The Proton donor role is filled by Glu-200. Residue Asp-278 participates in Zn(2+) binding. Asp-279 provides a ligand contact to substrate.

It belongs to the metallo-dependent hydrolases superfamily. Adenosine and AMP deaminases family. Adenosine deaminase subfamily. Zn(2+) is required as a cofactor.

The enzyme catalyses adenosine + H2O + H(+) = inosine + NH4(+). The catalysed reaction is 2'-deoxyadenosine + H2O + H(+) = 2'-deoxyinosine + NH4(+). Functionally, catalyzes the hydrolytic deamination of adenosine and 2-deoxyadenosine. This Shewanella baltica (strain OS223) protein is Adenosine deaminase.